The following is a 201-amino-acid chain: LexA repressor (201 aa).

Residues 29 to 49 (VREICKAVGLSSTSSVHFHLK) constitute a DNA-binding region (H-T-H motif). Residues Ser-125 and Lys-162 each act as for autocatalytic cleavage activity in the active site.

The protein belongs to the peptidase S24 family. As to quaternary structure, homodimer.

The enzyme catalyses Hydrolysis of Ala-|-Gly bond in repressor LexA.. Represses a number of genes involved in the response to DNA damage (SOS response), including recA and lexA. In the presence of single-stranded DNA, RecA interacts with LexA causing an autocatalytic cleavage which disrupts the DNA-binding part of LexA, leading to derepression of the SOS regulon and eventually DNA repair. The chain is LexA repressor from Clostridium botulinum (strain 657 / Type Ba4).